The chain runs to 180 residues: Large ribosomal subunit protein uL5 (180 aa).

This sequence belongs to the universal ribosomal protein uL5 family. In terms of assembly, part of the 50S ribosomal subunit; part of the 5S rRNA/L5/L18/L25 subcomplex. Contacts the 5S rRNA and the P site tRNA. Forms a bridge to the 30S subunit in the 70S ribosome.

In terms of biological role, this is one of the proteins that bind and probably mediate the attachment of the 5S RNA into the large ribosomal subunit, where it forms part of the central protuberance. In the 70S ribosome it contacts protein S13 of the 30S subunit (bridge B1b), connecting the 2 subunits; this bridge is implicated in subunit movement. Contacts the P site tRNA; the 5S rRNA and some of its associated proteins might help stabilize positioning of ribosome-bound tRNAs. The sequence is that of Large ribosomal subunit protein uL5 from Chlamydia pneumoniae (Chlamydophila pneumoniae).